Consider the following 429-residue polypeptide: Ribosomal RNA small subunit methyltransferase B (429 aa).

Residues 254 to 260 (CAAPGGK), Asp-277, Asp-303, and Asp-322 each bind S-adenosyl-L-methionine. The active-site Nucleophile is Cys-375.

It belongs to the class I-like SAM-binding methyltransferase superfamily. RsmB/NOP family.

It localises to the cytoplasm. The catalysed reaction is cytidine(967) in 16S rRNA + S-adenosyl-L-methionine = 5-methylcytidine(967) in 16S rRNA + S-adenosyl-L-homocysteine + H(+). Its function is as follows. Specifically methylates the cytosine at position 967 (m5C967) of 16S rRNA. This Escherichia coli O17:K52:H18 (strain UMN026 / ExPEC) protein is Ribosomal RNA small subunit methyltransferase B.